Consider the following 67-residue polypeptide: ATP synthase F(0) complex subunit 8 (67 aa).

Residues threonine 8–phenylalanine 24 traverse the membrane as a helical segment. At lysine 54 the chain carries N6-acetyllysine; alternate. Lysine 54 is modified (N6-succinyllysine; alternate). Position 57 is an N6-acetyllysine (lysine 57).

This sequence belongs to the ATPase protein 8 family. As to quaternary structure, component of the ATP synthase complex composed at least of ATP5F1A/subunit alpha, ATP5F1B/subunit beta, ATP5MC1/subunit c (homooctomer), MT-ATP6/subunit a, MT-ATP8/subunit 8, ATP5ME/subunit e, ATP5MF/subunit f, ATP5MG/subunit g, ATP5MK/subunit k, ATP5MJ/subunit j, ATP5F1C/subunit gamma, ATP5F1D/subunit delta, ATP5F1E/subunit epsilon, ATP5PF/subunit F6, ATP5PB/subunit b, ATP5PD/subunit d, ATP5PO/subunit OSCP. ATP synthase complex consists of a soluble F(1) head domain (subunits alpha(3) and beta(3)) - the catalytic core - and a membrane F(0) domain - the membrane proton channel (subunits c, a, 8, e, f, g, k and j). These two domains are linked by a central stalk (subunits gamma, delta, and epsilon) rotating inside the F1 region and a stationary peripheral stalk (subunits F6, b, d, and OSCP). Interacts with PRICKLE3.

The protein resides in the mitochondrion membrane. Its function is as follows. Subunit 8, of the mitochondrial membrane ATP synthase complex (F(1)F(0) ATP synthase or Complex V) that produces ATP from ADP in the presence of a proton gradient across the membrane which is generated by electron transport complexes of the respiratory chain. ATP synthase complex consist of a soluble F(1) head domain - the catalytic core - and a membrane F(1) domain - the membrane proton channel. These two domains are linked by a central stalk rotating inside the F(1) region and a stationary peripheral stalk. During catalysis, ATP synthesis in the catalytic domain of F(1) is coupled via a rotary mechanism of the central stalk subunits to proton translocation. In vivo, can only synthesize ATP although its ATP hydrolase activity can be activated artificially in vitro. Part of the complex F(0) domain. In Talpa europaea (European mole), this protein is ATP synthase F(0) complex subunit 8.